Consider the following 391-residue polypeptide: Oxygen-dependent coproporphyrinogen-III oxidase, chloroplastic (391 aa).

The span at 1 to 13 shows a compositional bias: polar residues; it reads MASSLLTTPSQTL. Positions 1–34 are disordered; that stretch reads MASSLLTTPSQTLAPNPAAARARRSSPAAAQVSF. A compositionally biased stretch (low complexity) spans 14-30; the sequence is APNPAAARARRSSPAAA. The tract at residues 125–134 is important for dimerization; it reads VLQDGNVFEK. S179 contributes to the substrate binding site. The Proton donor role is filled by H193. Substrate-binding positions include 195-197 and 349-354; these read NYR and GGRIES. Positions 331–366 are important for dimerization; sequence YVEFNLVYDRGTTFGLKTGGRIESILVSLPLTARWE.

The protein belongs to the aerobic coproporphyrinogen-III oxidase family. In terms of assembly, homodimer.

The protein resides in the plastid. It is found in the chloroplast. It catalyses the reaction coproporphyrinogen III + O2 + 2 H(+) = protoporphyrinogen IX + 2 CO2 + 2 H2O. It participates in porphyrin-containing compound metabolism; protoporphyrin-IX biosynthesis; protoporphyrinogen-IX from coproporphyrinogen-III (O2 route): step 1/1. Involved in the heme and chlorophyll biosynthesis. Catalyzes the aerobic oxidative decarboxylation of propionate groups of rings A and B of coproporphyrinogen-III to yield the vinyl groups in protoporphyrinogen-IX. In Hordeum vulgare (Barley), this protein is Oxygen-dependent coproporphyrinogen-III oxidase, chloroplastic (CPX).